Here is a 160-residue protein sequence, read N- to C-terminus: Transmembrane protein 216 (160 aa).

Transmembrane regions (helical) follow at residues 41-61 (WYFA…GVIL), 68-88 (LILD…RLFY), 101-121 (LFVS…YLLL), and 134-154 (AVLL…ISIF).

In terms of assembly, part of the tectonic-like complex (also named B9 complex).

It is found in the membrane. The protein localises to the cytoplasm. Its subcellular location is the cytoskeleton. It localises to the cilium basal body. Part of the tectonic-like complex which is required for tissue-specific ciliogenesis and may regulate ciliary membrane composition. The protein is Transmembrane protein 216 (tmem216) of Danio rerio (Zebrafish).